We begin with the raw amino-acid sequence, 1264 residues long: Regulator of G-protein signaling 22 (1264 aa).

Residues 565 to 587 (EEFSLSQPPKSPNKSPEVKTATQ) form a disordered region. Residues 568 to 578 (SLSQPPKSPNK) are compositionally biased toward polar residues. RGS domains are found at residues 852–980 (KFSD…AARQ) and 1021–1145 (AFRK…TDEN). Positions 1142–1174 (TDENIMSVLERRQEYNKQKKKLAVLEDEKSGKD) form a coiled coil.

Interacts with GNA11, GNA12 and GNA13. As to expression, testis-specific. Expressed in Leydig cells and spermatogenic cells from the spermatogonia to spermatid stages (at protein level).

Its subcellular location is the cytoplasm. The protein resides in the nucleus. Its function is as follows. Inhibits signal transduction by increasing the GTPase activity of G protein alpha subunits thereby driving them into their inactive GDP-bound form. This is Regulator of G-protein signaling 22 (RGS22) from Homo sapiens (Human).